Consider the following 1335-residue polypeptide: Aldehyde oxidase 2 (1335 aa).

One can recognise a 2Fe-2S ferredoxin-type domain in the interval 8–95 (DVLVFFVNGR…GAAVTTVEGV (88 aa)). 4 residues coordinate [2Fe-2S] cluster: Cys47, Cys52, Cys55, and Cys77. Gln116 provides a ligand contact to Mo-molybdopterin. Positions 117, 120, 152, and 154 each coordinate [2Fe-2S] cluster. Cys154 serves as a coordination point for Mo-molybdopterin. Residues 242-427 (FRGDRVTWVS…ESVHIPHSQK (186 aa)) enclose the FAD-binding PCMH-type domain. Residues 270-277 (LVLGNTAL), Ala351, Ser360, His364, Asp373, and Leu417 each bind FAD. Mo-molybdopterin is bound by residues 821-822 (GF), 1103-1106 (ASVG), Gln1218, and Leu1285. Glu1287 (proton acceptor; for azaheterocycle hydroxylase activity) is an active-site residue.

It belongs to the xanthine dehydrogenase family. Homodimer. [2Fe-2S] cluster is required as a cofactor. The cofactor is FAD. Requires Mo-molybdopterin as cofactor. As to expression, detected in kidney, Harderian gland and olfactory mucosa.

The protein localises to the cytoplasm. The catalysed reaction is an aldehyde + O2 + H2O = a carboxylate + H2O2 + H(+). Oxidase with broad substrate specificity, oxidizing aromatic azaheterocycles, such as phthalazine, as well as aldehydes, such as benzaldehyde and retinal. This Cavia porcellus (Guinea pig) protein is Aldehyde oxidase 2 (AOX2).